The chain runs to 529 residues: Peptide chain release factor 3 (529 aa).

Residues 11 to 280 (AKRRTFAIIS…GLVEWAPAPM (270 aa)) form the tr-type G domain. GTP is bound by residues 20 to 27 (SHPDAGKT), 88 to 92 (DTPGH), and 142 to 145 (NKLD).

It belongs to the TRAFAC class translation factor GTPase superfamily. Classic translation factor GTPase family. PrfC subfamily.

It localises to the cytoplasm. Functionally, increases the formation of ribosomal termination complexes and stimulates activities of RF-1 and RF-2. It binds guanine nucleotides and has strong preference for UGA stop codons. It may interact directly with the ribosome. The stimulation of RF-1 and RF-2 is significantly reduced by GTP and GDP, but not by GMP. This Shigella flexneri serotype 5b (strain 8401) protein is Peptide chain release factor 3.